The primary structure comprises 132 residues: Small ribosomal subunit protein uS11 (132 aa).

Positions isoleucine 110–leucine 132 are disordered. Residues arginine 123–leucine 132 show a composition bias toward basic residues.

The protein belongs to the universal ribosomal protein uS11 family. As to quaternary structure, component of the small ribosomal subunit. Mature ribosomes consist of a small (40S) and a large (60S) subunit. The 40S subunit contains about 32 different proteins and 1 molecule of RNA (18S). The 60S subunit contains 45 different proteins and 3 molecules of RNA (25S, 5.8S and 5S).

The protein localises to the cytoplasm. Its function is as follows. Component of the ribosome, a large ribonucleoprotein complex responsible for the synthesis of proteins in the cell. The small ribosomal subunit (SSU) binds messenger RNAs (mRNAs) and translates the encoded message by selecting cognate aminoacyl-transfer RNA (tRNA) molecules. The large subunit (LSU) contains the ribosomal catalytic site termed the peptidyl transferase center (PTC), which catalyzes the formation of peptide bonds, thereby polymerizing the amino acids delivered by tRNAs into a polypeptide chain. The nascent polypeptides leave the ribosome through a tunnel in the LSU and interact with protein factors that function in enzymatic processing, targeting, and the membrane insertion of nascent chains at the exit of the ribosomal tunnel. RPS14B is involved in nucleolar processing of pre-18S ribosomal RNA and ribosome assembly. This is Small ribosomal subunit protein uS11 (RPS14B) from Candida albicans (strain SC5314 / ATCC MYA-2876) (Yeast).